A 471-amino-acid chain; its full sequence is PVSASIRLLDSSKGGATIGATPMESDSSVSALSGSSASKVSRRGRRRSHLASKSSAPTQAKLVALASNGVPEPVGVLEEAFSSLEDARAATSNAANDAAPPAAAPAVDHTVAPDVSTAAKIAATTATAATAAARAGQAAMMAELSATQRMVRNSFRSLGGVDTEELSCAISRYDELVMALMLRCGELETRLAMPPPPPPPSKANTTAANAPQMPQVAPIAAPRTTKVRETWSAVVKCDDPALSGKAIAEKVRTMVAPSLGVRVHEVRELPSRWWCDHSYSSVGELQKVMASKRFAELGLNVARNAAEKPKVIVYDVDTAIGPEEFMQELHENNFDSEMTLAQFKKSVHLVTKAWSATDGATVNVTLEVDDRAMAKLDVGRVYIKWFSFRCRSQVRTYACHRCVGFDHKVSECRQKESVCRQCGQQGHTAAKCQNPVDCRNCRHRGQPSGHYMLSNACPIYGALLARVQARH.

The segment at 13 to 57 (KGGATIGATPMESDSSVSALSGSSASKVSRRGRRRSHLASKSSAP) is disordered. The span at 27–39 (SSVSALSGSSASK) shows a compositional bias: low complexity. A compositionally biased stretch (basic residues) spans 40–50 (VSRRGRRRSHL). 2 consecutive CCHC-type zinc fingers follow at residues 397-414 (YACH…ECRQ) and 417-434 (SVCR…KCQN). The segment at 438–457 (CRNCRHRGQPSGHYMLSNAC) is gag-like cysteine motif.

This sequence to corresponding ORF of B.mori (R1BM).

This is an uncharacterized protein from Drosophila melanogaster (Fruit fly).